A 440-amino-acid polypeptide reads, in one-letter code: Protein disulfide-isomerase 2-3 (440 aa).

Positions 1-24 are cleaved as a signal peptide; that stretch reads MYKSPLTLLTLLTICFGFFDLSSA. 2 Thioredoxin domains span residues 25 to 136 and 154 to 269; these read LYGS…KQIK and SKEK…ELVE. Residues Cys-60 and Cys-63 each act as nucleophile in the active site. A disulfide bond links Cys-60 and Cys-63. Residues 143-163 are disordered; sequence LEGKSKPTGGGSKEKKSEPSA. The N-linked (GlcNAc...) asparagine glycan is linked to Asn-168. Catalysis depends on nucleophile residues Cys-192 and Cys-195. Cysteines 192 and 195 form a disulfide. A Prevents secretion from ER motif is present at residues 437-440; it reads KDEL.

Belongs to the protein disulfide isomerase family. In terms of tissue distribution, widely expressed.

Its subcellular location is the endoplasmic reticulum lumen. The enzyme catalyses Catalyzes the rearrangement of -S-S- bonds in proteins.. Its function is as follows. Acts as a protein-folding catalyst that interacts with nascent polypeptides to catalyze the formation, isomerization, and reduction or oxidation of disulfide bonds. The polypeptide is Protein disulfide-isomerase 2-3 (PDIL2-3) (Arabidopsis thaliana (Mouse-ear cress)).